Reading from the N-terminus, the 331-residue chain is UPF0324 membrane protein SACOL0411 (331 aa).

The next 11 helical transmembrane spans lie at 9–26 (FMIG…SFLA), 31–48 (ILDK…AILY), 69–88 (LLRF…DIIG), 93–115 (LLAI…NKLL), 122–144 (ALLL…APIF), 154–176 (SIGI…YAIF), 183–202 (YGAW…LAGG), 217–234 (LGRV…ILIM), 247–269 (ISIP…VTIP), 273–295 (LNIL…GLNV), and 308–330 (LMTI…HWLY).

It belongs to the UPF0324 family.

Its subcellular location is the cell membrane. This chain is UPF0324 membrane protein SACOL0411, found in Staphylococcus aureus (strain COL).